The sequence spans 265 residues: Enolase-phosphatase E1 (265 aa).

Mg(2+) is bound by residues Asp-18 and Glu-20. Substrate is bound by residues 144 to 145 and Lys-188; that span reads SS. Asp-215 is a Mg(2+) binding site.

The protein belongs to the HAD-like hydrolase superfamily. MasA/MtnC family. Monomer. The cofactor is Mg(2+).

It is found in the cytoplasm. The protein localises to the nucleus. The catalysed reaction is 5-methylsulfanyl-2,3-dioxopentyl phosphate + H2O = 1,2-dihydroxy-5-(methylsulfanyl)pent-1-en-3-one + phosphate. Its pathway is amino-acid biosynthesis; L-methionine biosynthesis via salvage pathway; L-methionine from S-methyl-5-thio-alpha-D-ribose 1-phosphate: step 3/6. It participates in amino-acid biosynthesis; L-methionine biosynthesis via salvage pathway; L-methionine from S-methyl-5-thio-alpha-D-ribose 1-phosphate: step 4/6. Functionally, bifunctional enzyme that catalyzes the enolization of 2,3-diketo-5-methylthiopentyl-1-phosphate (DK-MTP-1-P) into the intermediate 2-hydroxy-3-keto-5-methylthiopentenyl-1-phosphate (HK-MTPenyl-1-P), which is then dephosphorylated to form the acireductone 1,2-dihydroxy-3-keto-5-methylthiopentene (DHK-MTPene). In Candida albicans (strain SC5314 / ATCC MYA-2876) (Yeast), this protein is Enolase-phosphatase E1.